We begin with the raw amino-acid sequence, 203 residues long: Fucoxanthin-chlorophyll a-c binding protein, chloroplastic (203 aa).

A chloroplast-targeting transit peptide spans 1–30 (MKLAIAALLAGSAAAFAPAQSGKASTALNM).

This sequence belongs to the fucoxanthin chlorophyll protein family. The LHC complex of chromophytic algae is composed of fucoxanthin, chlorophyll A and C bound non-covalently by fucoxanthin chlorophyll proteins (FCPs). The ratio of pigments in this LHC is; fucoxanthin: chlorophyll C: chlorophyll A; (0.6-1): (0.1-0.3): (1).

It localises to the plastid. It is found in the chloroplast thylakoid membrane. Its function is as follows. The light-harvesting complex (LHC) functions as a light receptor, it captures and delivers excitation energy to photosystems with which it is closely associated. Energy is transferred from the carotenoid and chlorophyll C (or B) to chlorophyll A and the photosynthetic reaction centers where it is used to synthesize ATP and reducing power. The chain is Fucoxanthin-chlorophyll a-c binding protein, chloroplastic (FCPA) from Trieres chinensis (Marine centric diatom).